Reading from the N-terminus, the 192-residue chain is Signal peptidase complex catalytic subunit sec11 (192 aa).

Over 1 to 18 (MLSFLSSNLSNTRQSIAQ) the chain is Cytoplasmic. Residues 19-39 (VLNFALVLSTAFMLWKGLSVV) form a helical; Signal-anchor for type II membrane protein membrane-spanning segment. Residues 40–192 (TASSSPIVVV…MGLMVILQRE (153 aa)) are Lumenal-facing. Residues Ser53, His92, and Asp134 each act as charge relay system in the active site. Residues 178–189 (VLLGIMGLMVIL) form a C-terminal short (CTS) helix region.

The protein belongs to the peptidase S26B family. In terms of assembly, component of the signal peptidase complex (SPC) composed of a catalytic subunit SEC11 and three accessory subunits SPC1, SPC2 and SPC3. The complex induces a local thinning of the ER membrane which is used to measure the length of the signal peptide (SP) h-region of protein substrates. This ensures the selectivity of the complex towards h-regions shorter than 18-20 amino acids. SPC associates with the translocon complex.

Its subcellular location is the endoplasmic reticulum membrane. It carries out the reaction Cleavage of hydrophobic, N-terminal signal or leader sequences from secreted and periplasmic proteins.. Functionally, catalytic component of the signal peptidase complex (SPC) which catalyzes the cleavage of N-terminal signal sequences from nascent proteins as they are translocated into the lumen of the endoplasmic reticulum. Specifically cleaves N-terminal signal peptides that contain a hydrophobic alpha-helix (h-region) shorter than 18-20 amino acids. The polypeptide is Signal peptidase complex catalytic subunit sec11 (sec11) (Emericella nidulans (strain FGSC A4 / ATCC 38163 / CBS 112.46 / NRRL 194 / M139) (Aspergillus nidulans)).